Here is a 65-residue protein sequence, read N- to C-terminus: Light-harvesting protein B800/830/1020 beta-2 chain (65 aa).

The Cytoplasmic portion of the chain corresponds to Thr-1 to Glu-17. A bacteriochlorophyll-binding residues include His-16 and Asn-34. The chain crosses the membrane as a helical span at residues Met-18 to Trp-40. Topologically, residues Arg-41 to Thr-65 are periplasmic.

This sequence belongs to the antenna complex beta subunit family. The core complex is formed by different alpha and beta chains, binding bacteriochlorophyll molecules, and arranged most probably in tetrameric structures disposed around the reaction center. The non-pigmented gamma chains may constitute additional components.

Its subcellular location is the cell inner membrane. Its function is as follows. Antenna complexes are light-harvesting systems, which transfer the excitation energy to the reaction centers. The polypeptide is Light-harvesting protein B800/830/1020 beta-2 chain (Halorhodospira halochloris (Ectothiorhodospira halochloris)).